Here is a 272-residue protein sequence, read N- to C-terminus: Serine/arginine-rich splicing factor 5 (272 aa).

The region spanning 4 to 74 (CRVFIGRLNP…ERVTIEHARA (71 aa)) is the RRM 1 domain. Positions 73 to 105 (RARSRGGRGRGRYSDRFSSRRPRNDRRNAPPVR) are disordered. The segment covering 74-83 (ARSRGGRGRG) has biased composition (basic residues). Residue S86 is modified to Phosphoserine. The RRM 2 domain maps to 108 to 181 (NRLIVENLSS…RKIKLIEGSK (74 aa)). At K167 the chain carries N6-acetyllysine. Positions 174-272 (IKLIEGSKRH…SRSRSVDSGN (99 aa)) are disordered. The segment covering 182–229 (RHSRSRSRSRSRTRSSSRSRSRSRSRSRKSYSRSRSRSRSRSRSKSRS) has biased composition (basic residues). S227, S229, S233, S250, and S253 each carry phosphoserine. Positions 242 to 254 (RGSSSRSKSPASV) are enriched in low complexity.

This sequence belongs to the splicing factor SR family. Interacts (via RS domain) with PHF5A (via N-terminus). Found in a pre-mRNA splicing complex with SRSF4/SFRS4, SRSF5/SFRS5, SNRNP70, SNRPA1, SRRM1 and SRRM2. Post-translationally, extensively phosphorylated on serine residues in the RS domain.

It localises to the nucleus. In terms of biological role, plays a role in constitutive splicing and can modulate the selection of alternative splice sites. The chain is Serine/arginine-rich splicing factor 5 (SRSF5) from Homo sapiens (Human).